The chain runs to 396 residues: Elongation factor Tu (396 aa).

The tr-type G domain occupies 10-205; sequence KPHVNIGTIG…ACDDNIPDPV (196 aa). The segment at 19 to 26 is G1; the sequence is GHVDHGKT. Residue 19-26 coordinates GTP; sequence GHVDHGKT. Residue Thr26 participates in Mg(2+) binding. The tract at residues 62–66 is G2; sequence GITIN. The interval 83 to 86 is G3; sequence DAPG. Residues 83 to 87 and 138 to 141 each bind GTP; these read DAPGH and NKCD. Residues 138–141 are G4; it reads NKCD. The interval 175–177 is G5; the sequence is SAL.

This sequence belongs to the TRAFAC class translation factor GTPase superfamily. Classic translation factor GTPase family. EF-Tu/EF-1A subfamily. As to quaternary structure, monomer.

The protein localises to the cytoplasm. The enzyme catalyses GTP + H2O = GDP + phosphate + H(+). GTP hydrolase that promotes the GTP-dependent binding of aminoacyl-tRNA to the A-site of ribosomes during protein biosynthesis. The sequence is that of Elongation factor Tu from Corynebacterium efficiens (strain DSM 44549 / YS-314 / AJ 12310 / JCM 11189 / NBRC 100395).